We begin with the raw amino-acid sequence, 187 residues long: Protein GrpE (187 aa).

Positions 1–26 are disordered; sequence MNDLKNAENGPDEADTPQGAPSQEPD.

The protein belongs to the GrpE family. As to quaternary structure, homodimer.

It is found in the cytoplasm. Functionally, participates actively in the response to hyperosmotic and heat shock by preventing the aggregation of stress-denatured proteins, in association with DnaK and GrpE. It is the nucleotide exchange factor for DnaK and may function as a thermosensor. Unfolded proteins bind initially to DnaJ; upon interaction with the DnaJ-bound protein, DnaK hydrolyzes its bound ATP, resulting in the formation of a stable complex. GrpE releases ADP from DnaK; ATP binding to DnaK triggers the release of the substrate protein, thus completing the reaction cycle. Several rounds of ATP-dependent interactions between DnaJ, DnaK and GrpE are required for fully efficient folding. This is Protein GrpE from Methylocella silvestris (strain DSM 15510 / CIP 108128 / LMG 27833 / NCIMB 13906 / BL2).